The primary structure comprises 392 residues: Putative transactivator/viroplasmin protein (392 aa).

A coiled-coil region spans residues 1–88 (MEDMMKQILE…NVEEQYQWKN (88 aa)). The disordered stretch occupies residues 358-392 (EIEKEEPGEEKNLEDVSTDDNNEKKKIRSVIVKET).

Belongs to the caulimoviridae viroplasmin family.

The protein resides in the host cytoplasm. In terms of biological role, enhances the translation of downstream ORFs on polycistronic mRNAs derived from cassava vein mosaic virus. The polypeptide is Putative transactivator/viroplasmin protein (Cassava vein mosaic virus (CsVMV)).